A 637-amino-acid chain; its full sequence is Poly [ADP-ribose] polymerase 2 (637 aa).

The DNA-binding element occupies 1 to 140 (MANKLKVDEL…KKEEKIVTAT (140 aa)). The SAP 1 domain occupies 2 to 36 (ANKLKVDELRLKLAERGLSTTGVKAVLVERLEEAI). A compositionally biased stretch (basic and acidic residues) spans 35-46 (AIAEDTKKEESK). The interval 35 to 56 (AIAEDTKKEESKSKRKRNSSND) is disordered. The Nuclear localization signal signature appears at 41–62 (KKEESKSKRKRNSSNDTYESNK). The region spanning 69 to 103 (FRGMIVKELREEAIKRGLDTTGTKKDLLERLCNDA) is the SAP 2 domain. A compositionally biased stretch (polar residues) spans 106–117 (VSNAPVKSSNGT). A disordered region spans residues 106 to 134 (VSNAPVKSSNGTDEAEDDNNGFEEEKKEE). Residues 118 to 127 (DEAEDDNNGF) show a composition bias toward acidic residues. Residues 158-255 (QYHVLQRGDD…KEFIPHPKSY (98 aa)) enclose the WGR domain. In terms of domain architecture, PARP alpha-helical spans 286–404 (QSKLDTRVAK…EIELATKLLS (119 aa)). The PARP catalytic domain maps to 412–637 (DPLYYHYQQL…VIQVKFNYKH (226 aa)).

The protein belongs to the ARTD/PARP family.

Its subcellular location is the nucleus. It catalyses the reaction NAD(+) + (ADP-D-ribosyl)n-acceptor = nicotinamide + (ADP-D-ribosyl)n+1-acceptor + H(+).. It carries out the reaction L-aspartyl-[protein] + NAD(+) = 4-O-(ADP-D-ribosyl)-L-aspartyl-[protein] + nicotinamide. The catalysed reaction is L-glutamyl-[protein] + NAD(+) = 5-O-(ADP-D-ribosyl)-L-glutamyl-[protein] + nicotinamide. Its function is as follows. Involved in the base excision repair (BER) pathway, by catalyzing the poly(ADP-ribosyl)ation of a limited number of acceptor proteins involved in chromatin architecture and in DNA metabolism. This modification follows DNA damages and appears as an obligatory step in a detection/signaling pathway leading to the reparation of DNA strand breaks. In Arabidopsis thaliana (Mouse-ear cress), this protein is Poly [ADP-ribose] polymerase 2 (PARP2).